Consider the following 304-residue polypeptide: Small ribosomal subunit protein uS3 (304 aa).

Residues 17–86 (MDEYFAKQLS…NPQIDAQEVK (70 aa)) form the KH type-2 domain.

Belongs to the universal ribosomal protein uS3 family. Part of the 30S ribosomal subunit.

Binds the lower part of the 30S subunit head. In Methanococcoides burtonii (strain DSM 6242 / NBRC 107633 / OCM 468 / ACE-M), this protein is Small ribosomal subunit protein uS3.